Here is a 215-residue protein sequence, read N- to C-terminus: Ribonuclease T (215 aa).

An Exonuclease domain is found at 20–194 (VVIDVETAGF…YDTLQTAKLF (175 aa)). Mg(2+) is bound by residues aspartate 23, glutamate 25, histidine 181, and aspartate 186. Histidine 181 acts as the Proton donor/acceptor in catalysis.

This sequence belongs to the RNase T family. In terms of assembly, homodimer. Mg(2+) is required as a cofactor.

In terms of biological role, trims short 3' overhangs of a variety of RNA species, leaving a one or two nucleotide 3' overhang. Responsible for the end-turnover of tRNA: specifically removes the terminal AMP residue from uncharged tRNA (tRNA-C-C-A). Also appears to be involved in tRNA biosynthesis. The protein is Ribonuclease T of Yersinia pseudotuberculosis serotype I (strain IP32953).